The primary structure comprises 1363 residues: Spike glycoprotein (1363 aa).

The first 13 residues, 1-13 (MFLILLISLPTAF), serve as a signal peptide directing secretion. Residues 14–1307 (AVIGDLKCTT…GTYEYYVKWP (1294 aa)) are Extracellular-facing. Residues 15–298 (VIGDLKCTTV…DFMSEIKCKT (284 aa)) form the BetaCoV S1-NTD domain. Disulfide bonds link cysteine 21-cysteine 165, cysteine 160-cysteine 193, cysteine 172-cysteine 252, cysteine 286-cysteine 296, and cysteine 331-cysteine 356. Asparagine 59 and asparagine 133 each carry an N-linked (GlcNAc...) asparagine; by host glycan. N-linked (GlcNAc...) asparagine; by host glycosylation is present at asparagine 198. A BetaCoV S1-CTD domain is found at 329-617 (PDCNIEAWLN…DVNSGTTCST (289 aa)). The N-linked (GlcNAc...) asparagine; by host glycan is linked to asparagine 359. 2 cysteine pairs are disulfide-bonded: cysteine 374/cysteine 427 and cysteine 386/cysteine 615. Residues asparagine 437, asparagine 649, asparagine 676, asparagine 696, asparagine 714, asparagine 739, and asparagine 788 are each glycosylated (N-linked (GlcNAc...) asparagine; by host). 2 fusion peptide regions span residues 914 to 935 (SAIEDLLFSKVKLSDVGFVEAY) and 933 to 953 (EAYNNCTGGAEIRDLICVQSY). Asparagine 937 is a glycosylation site (N-linked (GlcNAc...) asparagine; by host). An intrachain disulfide couples cysteine 938 to cysteine 949. The tract at residues 1014–1064 (QKLIANAFNNALGAIQEGFDATNSALVKIQAVVNANAETLNNLLQQLSNRF) is heptad repeat 1. Residues 1043 to 1087 (QAVVNANAETLNNLLQQLSNRFGAISSSLQEILSRLDALEAQAQI) are a coiled coil. N-linked (GlcNAc...) asparagine; by host glycans are attached at residues asparagine 1194, asparagine 1224, asparagine 1234, asparagine 1253, asparagine 1267, and asparagine 1288. Residues 1258–1296 (APDLSLDYINVTFLDLQDEMNRLQEAIKVLNQSYINLKD) form a heptad repeat 2 region. A coiled-coil region spans residues 1269–1297 (TFLDLQDEMNRLQEAIKVLNQSYINLKDI). A helical transmembrane segment spans residues 1308–1328 (WYVWLLIGFAGVAMLVLLFFI). At 1329 to 1363 (CCCTGCGTSCFKKCGGCCDDYTGHQELVIKTSHED) the chain is on the cytoplasmic side. The short motif at 1359–1363 (TSHED) is the KxHxx element.

Belongs to the betacoronaviruses spike protein family. Homotrimer; each monomer consists of a S1 and a S2 subunit. The resulting peplomers protrude from the virus surface as spikes. Specific enzymatic cleavages in vivo yield mature proteins. The precursor is processed into S1 and S2 by host cell furin or another cellular protease to yield the mature S1 and S2 proteins. Additionally, a second cleavage leads to the release of a fusion peptide after viral attachment to host cell receptor. Post-translationally, the cytoplasmic Cys-rich domain is palmitoylated. Spike glycoprotein is digested within host endosomes.

It is found in the virion membrane. The protein resides in the host endoplasmic reticulum-Golgi intermediate compartment membrane. It localises to the host cell membrane. Its function is as follows. Attaches the virion to the cell membrane by interacting with host receptor, initiating the infection. Functionally, mediates fusion of the virion and cellular membranes by acting as a class I viral fusion protein. Under the current model, the protein has at least three conformational states: pre-fusion native state, pre-hairpin intermediate state, and post-fusion hairpin state. During viral and target cell membrane fusion, the coiled coil regions (heptad repeats) assume a trimer-of-hairpins structure, positioning the fusion peptide in close proximity to the C-terminal region of the ectodomain. The formation of this structure appears to drive apposition and subsequent fusion of viral and target cell membranes. In terms of biological role, acts as a viral fusion peptide which is unmasked following S2 cleavage occurring upon virus endocytosis. The sequence is that of Spike glycoprotein from Bovine coronavirus (strain 98TXSF-110-LUN) (BCoV-LUN).